The following is a 387-amino-acid chain: Exodeoxyribonuclease 7 large subunit (387 aa).

This sequence belongs to the XseA family. Heterooligomer composed of large and small subunits.

Its subcellular location is the cytoplasm. The catalysed reaction is Exonucleolytic cleavage in either 5'- to 3'- or 3'- to 5'-direction to yield nucleoside 5'-phosphates.. Its function is as follows. Bidirectionally degrades single-stranded DNA into large acid-insoluble oligonucleotides, which are then degraded further into small acid-soluble oligonucleotides. The protein is Exodeoxyribonuclease 7 large subunit of Campylobacter fetus subsp. fetus (strain 82-40).